The following is a 694-amino-acid chain: MSEQHSVAVGKAANEHETAPRRNVRVKKRPLIRPLNSSASTLYEFALECFNKGGKRDGMAWRDVIEIHETKKTIVRKVDGKDKSIEKTWLYYEMSPYKMMTYQELIWVMHDMGRGLAKIGIKPNGEHKFHIFASTSHKWMKIFLGCISQGIPVVTAYDTLGESGLIHSMVETESAAIFTDNQLLAKMIVPLQSAKDIKFLIHNEPIDPNDRRQNGKLYKAAKDAINKIREVRPDIKIYSFEEVVKIGKKSKDEVKLHPPEPKDLACIMYTSGSISAPKGVVLTHYNIVSGIAGVGHNVFGWIGSTDRVLSFLPLAHIFELVFEFEAFYWNGILGYGSVKTLTNTSTRNCKGDLVEFKPTIMIGVAAVWETVRKAILEKISDLTPVLQKIFWSAYSMKEKSVPCTGFLSRMVFKKVRQATGGHLKYIMNGGSAISIDAQKFFSIVLCPMIIGYGLTETVANACVLEPDHFEYGIVGDLVGSVTAKLVDVKDLGYYAKNNQGELLLKGAPVCSEYYKNPIETAVSFTYDGWFRTGDIVEWTPKGQLKIIDRRKNLVKTLNGEYIALEKLESVYRSNSYVKNICVYADESRVKPVGIVVPNPGPLSKFAVKLRIMKKGEDIENYIHDKALRNAVFKEMIATAKSQGLVGIELLCGIVFFDEEWTPENGFVTSAQKLKRREILAAVKSEVERVYKENS.

Positions 1–25 are disordered; it reads MSEQHSVAVGKAANEHETAPRRNVR. An N-acetylserine modification is found at S2. 269-280 provides a ligand contact to ATP; sequence YTSGSISAPKGV. Positions 527 to 576 match the FACS motif; the sequence is DGWFRTGDIVEWTPKGQLKIIDRRKNLVKTLNGEYIALEKLESVYRSNSY.

The protein belongs to the ATP-dependent AMP-binding enzyme family. As to quaternary structure, interacts with FRK1. The cofactor is Mg(2+).

Its subcellular location is the cell membrane. It carries out the reaction a long-chain fatty acid + ATP + CoA = a long-chain fatty acyl-CoA + AMP + diphosphate. It catalyses the reaction (9Z)-octadecenoate + ATP + CoA = (9Z)-octadecenoyl-CoA + AMP + diphosphate. The enzyme catalyses hexadecanoate + ATP + CoA = hexadecanoyl-CoA + AMP + diphosphate. The catalysed reaction is (9Z)-hexadecenoate + ATP + CoA = (9Z)-hexadecenoyl-CoA + AMP + diphosphate. It carries out the reaction (9Z)-tetradecenoate + ATP + CoA = (9Z)-tetradecenoyl-CoA + AMP + diphosphate. It catalyses the reaction (9Z,12Z)-octadecadienoate + ATP + CoA = (9Z,12Z)-octadecadienoyl-CoA + AMP + diphosphate. In terms of biological role, activates endogenous long-chain fatty acids (LCFA) by esterification of the fatty acids into metabolically active CoA-thioesters for subsequent degradation or incorporation into phospholipids. Acts preferentially on C16 and C18 fatty acids with a cis-double bond at C-9-C-10. The chain is Long-chain-fatty-acid--CoA ligase 3 (FAA3) from Saccharomyces cerevisiae (strain ATCC 204508 / S288c) (Baker's yeast).